A 478-amino-acid chain; its full sequence is Probable serine carboxypeptidase CPVL (478 aa).

The signal sequence occupies residues 1–22 (MVRAKWKMVVSLILFMVSPGDG). Residues Asn-83 and Asn-134 are each glycosylated (N-linked (GlcNAc...) asparagine). Residue Ser-206 is part of the active site. N-linked (GlcNAc...) asparagine glycosylation is found at Asn-309 and Asn-350. Active-site residues include Asp-390 and His-450.

Belongs to the peptidase S10 family.

Its function is as follows. May be involved in the digestion of phagocytosed particles in the lysosome, participation in an inflammatory protease cascade, and trimming of peptides for antigen presentation. This is Probable serine carboxypeptidase CPVL (Cpvl) from Mus musculus (Mouse).